A 239-amino-acid polypeptide reads, in one-letter code: Putative HTH-type transcriptional regulator YkgA (239 aa).

Residues 19–117 (QQLLEWIECN…GCSPREYRHR (99 aa)) enclose the HTH araC/xylS-type domain. 2 consecutive DNA-binding regions (H-T-H motif) follow at residues 36–57 (EDIA…RNFM) and 84–107 (MLDI…KKLF).

The protein is Putative HTH-type transcriptional regulator YkgA (ykgA) of Escherichia coli (strain K12).